We begin with the raw amino-acid sequence, 230 residues long: MKEERPIIALDFSSFEETKAFLDLFPAEEKLYVKIGMELYYAQGPDIVRYIKSLGHNVFLDLKLHDIPNTVRAAMAVLKELDIDMATVHAAGGVEMLKAAREGLGQGPTLIAVTQLTSTSEDQMRGDQNIQTSLLESVLHYSKGAAKAQLDGVVCSAQEVEAIKAVTPTGFNCLTPGIRPKGSNIGDQKRVMTPNQARRIGSDYIVVGRPITQAKDPVATYQAIKAEWAG.

Substrate contacts are provided by residues Asp11, Lys34, 61 to 70 (DLKLHDIPNT), Thr117, Arg179, Gln188, Gly208, and Arg209. Lys63 acts as the Proton donor in catalysis.

This sequence belongs to the OMP decarboxylase family. Type 1 subfamily. Homodimer.

The enzyme catalyses orotidine 5'-phosphate + H(+) = UMP + CO2. The protein operates within pyrimidine metabolism; UMP biosynthesis via de novo pathway; UMP from orotate: step 2/2. Its function is as follows. Catalyzes the decarboxylation of orotidine 5'-monophosphate (OMP) to uridine 5'-monophosphate (UMP). This is Orotidine 5'-phosphate decarboxylase from Streptococcus pyogenes serotype M49 (strain NZ131).